The following is a 173-amino-acid chain: MDIEEFVERSIGCWRSQRSGHSLALSHFEEVRSTIDIVDLPKTDHEVKNLCDSSGVDIENAVSPFKMSWEGESDWDENEIIKGSCVLVPIPEDDNLKKGKLLRSQGYAETVSAVGEYYITEDDTFVLYTEYESAAAEEKIWFHTSNLRFRVSLIKTSDGNGVLTASFSSEIRS.

Belongs to the CpcS/CpeS biliprotein lyase family.

In terms of biological role, covalently attaches a chromophore to Cys residue(s) of phycobiliproteins. The polypeptide is Chromophore lyase CpcS/CpeS 3 (Trichodesmium erythraeum (strain IMS101)).